Here is a 75-residue protein sequence, read N- to C-terminus: Small ribosomal subunit protein bS16 (75 aa).

Belongs to the bacterial ribosomal protein bS16 family.

The sequence is that of Small ribosomal subunit protein bS16 from Campylobacter jejuni subsp. jejuni serotype O:23/36 (strain 81-176).